The chain runs to 144 residues: Deoxyuridine 5'-triphosphate nucleotidohydrolase (144 aa).

8 residues coordinate dUMP: serine 66, glycine 79, aspartate 82, tyrosine 85, lysine 90, arginine 134, phenylalanine 139, and glycine 140.

Belongs to the dUTPase family. As to quaternary structure, homotrimer. Mg(2+) is required as a cofactor.

It carries out the reaction dUTP + H2O = dUMP + diphosphate + H(+). The protein operates within pyrimidine metabolism; dUMP biosynthesis; dUMP from dCTP (dUTP route): step 2/2. Involved in nucleotide metabolism via production of dUMP, the immediate precursor of thymidine nucleotides, and decreases the intracellular concentration of dUTP so that uracil cannot be incorporated into DNA. This chain is Deoxyuridine 5'-triphosphate nucleotidohydrolase (DUT1), found in Candida glabrata (strain ATCC 2001 / BCRC 20586 / JCM 3761 / NBRC 0622 / NRRL Y-65 / CBS 138) (Yeast).